Consider the following 556-residue polypeptide: Formate--tetrahydrofolate ligase (556 aa).

65–72 is a binding site for ATP; it reads TPAGEGKS.

Belongs to the formate--tetrahydrofolate ligase family.

It catalyses the reaction (6S)-5,6,7,8-tetrahydrofolate + formate + ATP = (6R)-10-formyltetrahydrofolate + ADP + phosphate. Its pathway is one-carbon metabolism; tetrahydrofolate interconversion. This chain is Formate--tetrahydrofolate ligase, found in Streptococcus agalactiae serotype V (strain ATCC BAA-611 / 2603 V/R).